The following is a 583-amino-acid chain: Threonine--tRNA ligase (583 aa).

The segment at 185–478 is catalytic; that stretch reads DHRKLGRELD…LVEHYGGAFP (294 aa). 3 residues coordinate Zn(2+): Cys278, His329, and His455.

The protein belongs to the class-II aminoacyl-tRNA synthetase family. In terms of assembly, homodimer. Zn(2+) is required as a cofactor.

Its subcellular location is the cytoplasm. The enzyme catalyses tRNA(Thr) + L-threonine + ATP = L-threonyl-tRNA(Thr) + AMP + diphosphate + H(+). In terms of biological role, catalyzes the attachment of threonine to tRNA(Thr) in a two-step reaction: L-threonine is first activated by ATP to form Thr-AMP and then transferred to the acceptor end of tRNA(Thr). Also edits incorrectly charged L-seryl-tRNA(Thr). The sequence is that of Threonine--tRNA ligase from Borrelia hermsii (strain HS1 / DAH).